We begin with the raw amino-acid sequence, 372 residues long: Alanine dehydrogenase (372 aa).

2 residues coordinate substrate: arginine 15 and lysine 75. The active-site Proton donor/acceptor is the histidine 96. NAD(+)-binding positions include serine 134, 178-179 (TA), aspartate 198, serine 220, 239-240 (VL), 266-269 (IAID), arginine 279, and 298-301 (VANM). Aspartate 269 acts as the Proton donor/acceptor in catalysis.

This sequence belongs to the AlaDH/PNT family. As to quaternary structure, homohexamer.

It is found in the cytoplasm. It catalyses the reaction L-alanine + NAD(+) + H2O = pyruvate + NH4(+) + NADH + H(+). The protein operates within amino-acid degradation; L-alanine degradation via dehydrogenase pathway; NH(3) and pyruvate from L-alanine: step 1/1. Its function is as follows. Catalyzes the reversible reductive amination of pyruvate to L-alanine. A key factor in the assimilation of L-alanine as an energy source via the tricarboxylic acid cycle during sporulation. The protein is Alanine dehydrogenase (ald) of Geobacillus stearothermophilus (Bacillus stearothermophilus).